The primary structure comprises 429 residues: C4-dicarboxylate transport protein (429 aa).

The next 8 membrane-spanning stretches (helical) occupy residues 3 to 23, 44 to 64, 76 to 96, 144 to 164, 184 to 204, 222 to 242, 331 to 351, and 352 to 372; these read VSIF…GVLL, LIKM…IAGM, IALL…LVVV, AFAS…GFAL, VIFG…FGAM, LILC…GTIA, TLLV…GSGF, and IVLA…LALI.

This sequence belongs to the dicarboxylate/amino acid:cation symporter (DAACS) (TC 2.A.23) family.

It localises to the cell inner membrane. Responsible for the transport of dicarboxylates such as succinate, fumarate, and malate from the periplasm across the membrane. This Yersinia pseudotuberculosis serotype O:1b (strain IP 31758) protein is C4-dicarboxylate transport protein.